Consider the following 95-residue polypeptide: Co-chaperonin GroES (95 aa).

Belongs to the GroES chaperonin family. Heptamer of 7 subunits arranged in a ring. Interacts with the chaperonin GroEL.

The protein localises to the cytoplasm. Functionally, together with the chaperonin GroEL, plays an essential role in assisting protein folding. The GroEL-GroES system forms a nano-cage that allows encapsulation of the non-native substrate proteins and provides a physical environment optimized to promote and accelerate protein folding. GroES binds to the apical surface of the GroEL ring, thereby capping the opening of the GroEL channel. In Chlorobaculum tepidum (strain ATCC 49652 / DSM 12025 / NBRC 103806 / TLS) (Chlorobium tepidum), this protein is Co-chaperonin GroES.